Consider the following 521-residue polypeptide: NAD(P)H-quinone oxidoreductase subunit 2 (521 aa).

The next 14 helical transmembrane spans lie at 14-34 (VILPEGIVIVTLLTVLVTDLI), 42-62 (LTPALAITGLSAAIAVLTLQW), 79-99 (LSIVFRGIVLLSAAVTILLSI), 109-129 (LGEFITILLTASLGGMFLSGA), 132-152 (LVTIFVSLETLSISSYLLTGY), 167-187 (LLIGAASSAIFLYGVSLLYGL), 207-227 (LALLISLIFVIAGIAFKISAV), 241-261 (PTPIVAFLSVGSKAAGFALAI), 275-295 (WHFVFTALAILSLVLGNVVAL), 303-323 (LLAYSSIAQAGFVMIGLIAGT), 331-351 (VYYLLIYLFMNLGGFACVILF), 375-395 (LGLSLCLLSLGGIPPLAGFFG), 397-417 (LYLFWAGWQAGLYGLVLLALI), and 463-483 (AGLVVCVIATAVAGILSNPLF).

It belongs to the complex I subunit 2 family. As to quaternary structure, NDH-1 can be composed of about 15 different subunits; different subcomplexes with different compositions have been identified which probably have different functions.

It is found in the cellular thylakoid membrane. The enzyme catalyses a plastoquinone + NADH + (n+1) H(+)(in) = a plastoquinol + NAD(+) + n H(+)(out). It carries out the reaction a plastoquinone + NADPH + (n+1) H(+)(in) = a plastoquinol + NADP(+) + n H(+)(out). Functionally, NDH-1 shuttles electrons from an unknown electron donor, via FMN and iron-sulfur (Fe-S) centers, to quinones in the respiratory and/or the photosynthetic chain. The immediate electron acceptor for the enzyme in this species is believed to be plastoquinone. Couples the redox reaction to proton translocation, and thus conserves the redox energy in a proton gradient. Cyanobacterial NDH-1 also plays a role in inorganic carbon-concentration. The protein is NAD(P)H-quinone oxidoreductase subunit 2 of Synechococcus elongatus (strain ATCC 33912 / PCC 7942 / FACHB-805) (Anacystis nidulans R2).